Here is a 191-residue protein sequence, read N- to C-terminus: Threonylcarbamoyl-AMP synthase (191 aa).

Residues 10-191 form the YrdC-like domain; sequence VPKLTQCVRT…DLYTDAIIRA (182 aa).

The protein belongs to the SUA5 family. TsaC subfamily.

It localises to the cytoplasm. The catalysed reaction is L-threonine + hydrogencarbonate + ATP = L-threonylcarbamoyladenylate + diphosphate + H2O. Required for the formation of a threonylcarbamoyl group on adenosine at position 37 (t(6)A37) in tRNAs that read codons beginning with adenine. Catalyzes the conversion of L-threonine, HCO(3)(-)/CO(2) and ATP to give threonylcarbamoyl-AMP (TC-AMP) as the acyladenylate intermediate, with the release of diphosphate. The protein is Threonylcarbamoyl-AMP synthase of Saccharophagus degradans (strain 2-40 / ATCC 43961 / DSM 17024).